Reading from the N-terminus, the 118-residue chain is Holo-[acyl-carrier-protein] synthase (118 aa).

Mg(2+)-binding residues include D8 and E58.

The protein belongs to the P-Pant transferase superfamily. AcpS family. The cofactor is Mg(2+).

Its subcellular location is the cytoplasm. It catalyses the reaction apo-[ACP] + CoA = holo-[ACP] + adenosine 3',5'-bisphosphate + H(+). In terms of biological role, transfers the 4'-phosphopantetheine moiety from coenzyme A to a Ser of acyl-carrier-protein. This chain is Holo-[acyl-carrier-protein] synthase, found in Streptococcus pyogenes serotype M28 (strain MGAS6180).